The following is a 242-amino-acid chain: Terpene cyclase cle7 (242 aa).

7 consecutive transmembrane segments (helical) span residues 20 to 40 (LLLT…ITTI), 50 to 69 (GVSL…FAIL), 79 to 101 (VILR…FARS), 117 to 137 (LFVL…SVLL), 143 to 163 (FYWS…GILV), 172 to 192 (SYGM…SLFL), and 207 to 227 (ILMR…GVCF).

Belongs to the paxB family.

It localises to the membrane. The protein operates within secondary metabolite biosynthesis; terpenoid biosynthesis. Non-reducing polyketide synthase; part of the cluster A that mediates the biosynthesis of chevalone E and its oxidized derivatives that possess a unique five-membered lactone ring and can synergistically enhance the cytotoxicity of doxorubicin (DOX) in breast cancer cells. Within the pathway, cle7 takes part to the biosynthesis of the molecular scaffold by catalyzing the cyclization of the prenyl group initiated by protonation and ring-opening of the epoxide to produce the chevalone E intermediate. The molecular scaffold is commonly biosynthesized by a series of enzymes including the non-reducing polyketide synthase (NR-PKS) cle1 that produces the alpha-pyrone triacetic acid lactone (TAL); The membrane-bound prenyltransferase cle5 that accepts TAL as its substrate to perform a C-3 geranylgeranylation reaction, in which the pathway-dedicated GGPS cle6 is required to provide GGPP, the other substrate of cle5; the FAD-dependent monooxygenase Cle3 that forms an (S)-epoxide ring at the terminal olefin of the geranylgeranyl group; and the terpene cyclase Cle7 that catalyzes the cyclization of the prenyl group that yields the pentacyclic pathway intermediate chevalone E. Chevalone E can derivatize into seven new oxidized analogs by the cytochrome P450 monooxygenases cle2 (acting at C-20) and cle4 (acting at C-11 and C-12). The polypeptide is Terpene cyclase cle7 (Aspergillus versicolor).